The chain runs to 446 residues: Phosphoglucosamine mutase (446 aa).

Serine 103 acts as the Phosphoserine intermediate in catalysis. Serine 103, aspartate 242, aspartate 244, and aspartate 246 together coordinate Mg(2+). A Phosphoserine modification is found at serine 103.

It belongs to the phosphohexose mutase family. Mg(2+) is required as a cofactor. Activated by phosphorylation.

It carries out the reaction alpha-D-glucosamine 1-phosphate = D-glucosamine 6-phosphate. In terms of biological role, catalyzes the conversion of glucosamine-6-phosphate to glucosamine-1-phosphate. In Vibrio cholerae serotype O1 (strain ATCC 39315 / El Tor Inaba N16961), this protein is Phosphoglucosamine mutase.